A 1026-amino-acid chain; its full sequence is DNA polymerase catalytic subunit (1026 aa).

The stretch at 664-695 forms a coiled coil; that stretch reads LKTWLAKRKSIKKELEQCQDAKMKTILDKQQL.

This sequence belongs to the DNA polymerase type-B family.

It is found in the host nucleus. It carries out the reaction DNA(n) + a 2'-deoxyribonucleoside 5'-triphosphate = DNA(n+1) + diphosphate. Replicates viral genomic DNA. The sequence is that of DNA polymerase catalytic subunit (9) from Alcelaphine herpesvirus 1 (strain C500) (AlHV-1).